Here is a 477-residue protein sequence, read N- to C-terminus: Aspartyl/glutamyl-tRNA(Asn/Gln) amidotransferase subunit B (477 aa).

It belongs to the GatB/GatE family. GatB subfamily. Heterotrimer of A, B and C subunits.

The enzyme catalyses L-glutamyl-tRNA(Gln) + L-glutamine + ATP + H2O = L-glutaminyl-tRNA(Gln) + L-glutamate + ADP + phosphate + H(+). The catalysed reaction is L-aspartyl-tRNA(Asn) + L-glutamine + ATP + H2O = L-asparaginyl-tRNA(Asn) + L-glutamate + ADP + phosphate + 2 H(+). Functionally, allows the formation of correctly charged Asn-tRNA(Asn) or Gln-tRNA(Gln) through the transamidation of misacylated Asp-tRNA(Asn) or Glu-tRNA(Gln) in organisms which lack either or both of asparaginyl-tRNA or glutaminyl-tRNA synthetases. The reaction takes place in the presence of glutamine and ATP through an activated phospho-Asp-tRNA(Asn) or phospho-Glu-tRNA(Gln). This chain is Aspartyl/glutamyl-tRNA(Asn/Gln) amidotransferase subunit B, found in Ureaplasma urealyticum serovar 10 (strain ATCC 33699 / Western).